We begin with the raw amino-acid sequence, 190 residues long: Cytoglobin (190 aa).

The disordered stretch occupies residues Met-1–Glu-21. The Globin domain occupies Glu-18–Lys-167. An intrachain disulfide couples Cys-38 to Cys-83. Residues His-81 and His-113 each contribute to the heme b site.

It belongs to the globin family. Monomeric. Homodimer; disulfide-linked in vitro. Also homooligomeric in vitro. The formation of an intramolecular disulfide bond between cysteines Cys-38 and Cys-83 specifically enhances the nitrite reductase activity. Expressed in brain and retina by non-neuronal cells (at protein level). This is the major globin expressed in vascular smooth muscle and is not present in the endothelium (at protein level).

Its subcellular location is the cytoplasm. The protein resides in the nucleus. The catalysed reaction is Fe(II)-heme b-[protein] + nitric oxide + O2 = Fe(III)-heme b-[protein] + nitrate. It carries out the reaction 2 superoxide + 2 H(+) = H2O2 + O2. The enzyme catalyses Fe(III)-heme b-[protein] + nitric oxide + H2O = Fe(II)-heme b-[protein] + nitrite + 2 H(+). It catalyses the reaction H2O2 + AH2 = A + 2 H2O. With respect to regulation, the nitric oxide dioxygenase activity is activated by a reducing system composed of cytochrome b5, its upstream reductase CYB5R3 and NADH. Functionally, probable multifunctional globin with a hexacoordinated heme iron required for the catalysis of various reactions depending on redox condition of the cell as well as oxygen availability. Has a nitric oxide dioxygenase (NOD) activity and is most probably involved in cell-mediated and oxygen-dependent nitric oxide consumption. By scavenging this second messenger may regulate several biological processes including endothelium-mediated vasodilation and vascular tone. Under normoxic conditions functions as a nitric oxide dioxygenase (NOD) but under hypoxic conditions the globin may switch its function to that of a nitrite (NO2) reductase (NiR), generating nitric oxide. Could also have peroxidase and superoxide dismutase activities, detoxifying reactive oxygen species and protecting cells against oxidative stress. Also binds dioxygen with low affinity and could function as an oxygen sensor but has probably no function as a respiratory oxygen carrier. The sequence is that of Cytoglobin from Mus musculus (Mouse).